The sequence spans 211 residues: Proteasome subunit beta 1 (211 aa).

The propeptide at Met1–Gly17 is removed in mature form; by autocatalysis. Thr18 acts as the Nucleophile in catalysis.

Belongs to the peptidase T1B family. In terms of assembly, the 20S proteasome core is composed of 14 alpha and 14 beta subunits that assemble into four stacked heptameric rings, resulting in a barrel-shaped structure. The two inner rings, each composed of seven catalytic beta subunits, are sandwiched by two outer rings, each composed of seven alpha subunits. The catalytic chamber with the active sites is on the inside of the barrel. Has a gated structure, the ends of the cylinder being occluded by the N-termini of the alpha-subunits. Is capped at one or both ends by the proteasome regulatory ATPase, PAN.

The protein resides in the cytoplasm. The enzyme catalyses Cleavage of peptide bonds with very broad specificity.. The formation of the proteasomal ATPase PAN-20S proteasome complex, via the docking of the C-termini of PAN into the intersubunit pockets in the alpha-rings, triggers opening of the gate for substrate entry. Interconversion between the open-gate and close-gate conformations leads to a dynamic regulation of the 20S proteasome proteolysis activity. Functionally, component of the proteasome core, a large protease complex with broad specificity involved in protein degradation. The protein is Proteasome subunit beta 1 of Saccharolobus islandicus (strain M.16.27) (Sulfolobus islandicus).